The primary structure comprises 290 residues: Phosphatidylserine decarboxylase proenzyme (290 aa).

Catalysis depends on charge relay system; for autoendoproteolytic cleavage activity residues Asp-96, His-153, and Ser-257. The active-site Schiff-base intermediate with substrate; via pyruvic acid; for decarboxylase activity is the Ser-257. The residue at position 257 (Ser-257) is a Pyruvic acid (Ser); by autocatalysis.

The protein belongs to the phosphatidylserine decarboxylase family. PSD-B subfamily. Prokaryotic type I sub-subfamily. Heterodimer of a large membrane-associated beta subunit and a small pyruvoyl-containing alpha subunit. Pyruvate serves as cofactor. In terms of processing, is synthesized initially as an inactive proenzyme. Formation of the active enzyme involves a self-maturation process in which the active site pyruvoyl group is generated from an internal serine residue via an autocatalytic post-translational modification. Two non-identical subunits are generated from the proenzyme in this reaction, and the pyruvate is formed at the N-terminus of the alpha chain, which is derived from the carboxyl end of the proenzyme. The autoendoproteolytic cleavage occurs by a canonical serine protease mechanism, in which the side chain hydroxyl group of the serine supplies its oxygen atom to form the C-terminus of the beta chain, while the remainder of the serine residue undergoes an oxidative deamination to produce ammonia and the pyruvoyl prosthetic group on the alpha chain. During this reaction, the Ser that is part of the protease active site of the proenzyme becomes the pyruvoyl prosthetic group, which constitutes an essential element of the active site of the mature decarboxylase.

The protein localises to the cell membrane. It catalyses the reaction a 1,2-diacyl-sn-glycero-3-phospho-L-serine + H(+) = a 1,2-diacyl-sn-glycero-3-phosphoethanolamine + CO2. The protein operates within phospholipid metabolism; phosphatidylethanolamine biosynthesis; phosphatidylethanolamine from CDP-diacylglycerol: step 2/2. Functionally, catalyzes the formation of phosphatidylethanolamine (PtdEtn) from phosphatidylserine (PtdSer). This is Phosphatidylserine decarboxylase proenzyme from Haemophilus influenzae (strain ATCC 51907 / DSM 11121 / KW20 / Rd).